Reading from the N-terminus, the 163-residue chain is Globin CTT-V (163 aa).

The signal sequence occupies residues 1 to 16 (MKFFAVLTLCIIGAIA). The region spanning 18 to 163 (PLTSDEANLV…YTVAFEVIPA (146 aa)) is the Globin domain. Positions 76 and 111 each coordinate heme b.

This sequence belongs to the globin family.

This is Globin CTT-V (CTT-V) from Chironomus thummi piger (Midge).